The following is a 193-amino-acid chain: MLHLLVGLGNPGKEYELTRHNVGFMIIDAIMHHFLFPDFKKKHNALISSGSIQSYKVILAKPYTFMNNSGAPISSIVKLYKIPLDNIIVFHDETDIDFCTIRIKKGGGNAGHNGLKSIDTLLGRDYWRIRFGIGHPSNGYDLSYHVLSQFNNLNAVNNTISNIIEHISLLFENDKSIFKNKVKDLIKYTDISS.

Y15 lines the tRNA pocket. Residue H20 is the Proton acceptor of the active site. TRNA-binding residues include F65, N67, and N113.

It belongs to the PTH family. In terms of assembly, monomer.

The protein localises to the cytoplasm. The catalysed reaction is an N-acyl-L-alpha-aminoacyl-tRNA + H2O = an N-acyl-L-amino acid + a tRNA + H(+). In terms of biological role, hydrolyzes ribosome-free peptidyl-tRNAs (with 1 or more amino acids incorporated), which drop off the ribosome during protein synthesis, or as a result of ribosome stalling. Its function is as follows. Catalyzes the release of premature peptidyl moieties from peptidyl-tRNA molecules trapped in stalled 50S ribosomal subunits, and thus maintains levels of free tRNAs and 50S ribosomes. This is Peptidyl-tRNA hydrolase from Ehrlichia ruminantium (strain Gardel).